A 554-amino-acid polypeptide reads, in one-letter code: Protein translocase subunit SecD (554 aa).

A run of 6 helical transmembrane segments spans residues 10–30, 392–412, 414–434, 435–455, 491–511, and 516–536; these read LVIL…MFYA, AGMV…IASY, LFGF…FAVM, GAIG…TIGT, AIID…VLGA, and GFAV…IWVV.

The protein belongs to the SecD/SecF family. SecD subfamily. Forms a complex with SecF. Part of the essential Sec protein translocation apparatus which comprises SecA, SecYEG and auxiliary proteins SecDF-YajC and YidC.

Its subcellular location is the cell inner membrane. Its function is as follows. Part of the Sec protein translocase complex. Interacts with the SecYEG preprotein conducting channel. SecDF uses the proton motive force (PMF) to complete protein translocation after the ATP-dependent function of SecA. The chain is Protein translocase subunit SecD from Rhodobacter capsulatus (strain ATCC BAA-309 / NBRC 16581 / SB1003).